A 217-amino-acid chain; its full sequence is Peptide deformylase (217 aa).

Residues cysteine 91 and histidine 133 each coordinate Fe cation. Residue glutamate 134 is part of the active site. Histidine 137 contacts Fe cation. The tract at residues 153–217 (VSEDGEEEEE…RRGSAAAKEE (65 aa)) is disordered. Positions 155–176 (EDGEEEEEAEVAEVMPEPEAEG) are enriched in acidic residues. The span at 177-192 (AGEPSAEGAGQAAAEA) shows a compositional bias: low complexity. The span at 206–217 (GERRGSAAAKEE) shows a compositional bias: basic and acidic residues.

The protein belongs to the polypeptide deformylase family. The cofactor is Fe(2+).

The enzyme catalyses N-terminal N-formyl-L-methionyl-[peptide] + H2O = N-terminal L-methionyl-[peptide] + formate. Removes the formyl group from the N-terminal Met of newly synthesized proteins. Requires at least a dipeptide for an efficient rate of reaction. N-terminal L-methionine is a prerequisite for activity but the enzyme has broad specificity at other positions. The chain is Peptide deformylase from Symbiobacterium thermophilum (strain DSM 24528 / JCM 14929 / IAM 14863 / T).